A 298-amino-acid chain; its full sequence is Glutamate/glycine mitochondrial carrier ymc1 (298 aa).

Solcar repeat units follow at residues 14–98, 106–193, and 206–294; these read TKDF…CKRF, VTMP…LVKN, and TPGW…VSQH. 6 helical membrane passes run 17–37, 67–87, 112–132, 172–192, 212–232, and 266–287; these read FLAG…FDCV, LAAF…CVSI, YVSG…VEHV, TAAR…ALVK, CVFG…FDIV, and FYRG…TFYV.

Belongs to the mitochondrial carrier (TC 2.A.29) family.

The protein resides in the mitochondrion inner membrane. Its function is as follows. Acts as a glutamate and glycine mitochondrial transmembrane transporter. The protein is Glutamate/glycine mitochondrial carrier ymc1 (ymc1) of Schizosaccharomyces pombe (strain 972 / ATCC 24843) (Fission yeast).